The following is a 183-amino-acid chain: Ras-related protein Rap-2a (183 aa).

10–17 (GSGGVGKS) provides a ligand contact to GTP. The short motif at 32–40 (YDPTIEDFY) is the Effector region element. GTP-binding positions include 57–61 (DTAGT) and 116–119 (NKVD). S-palmitoyl cysteine attachment occurs at residues cysteine 176 and cysteine 177. At cysteine 180 the chain carries Cysteine methyl ester. Cysteine 180 carries S-farnesyl cysteine lipidation. Residues 181-183 (VIL) constitute a propeptide, removed in mature form.

It belongs to the small GTPase superfamily. Ras family. Interacts (GTP-bound form) with RUNDC3A. Interacts with PLCE1. Interacts with ARHGAP29, SGSM1, SGSM2 and SGSM3. Interacts (GTP-bound form preferentially) with TNIK (via the CNH domain); the interaction is direct and recruits RAP2A to the E3 ubiquitin ligase NEDD4. Interacts with MINK1. Interacts (GTP-bound form preferentially) with MAP4K4. Interacts with cytoskeletal actin. Interacts with RGS14; the interaction is GTP-dependent. In terms of processing, ubiquitinated; undergoes 'Lys-63' monoubiquitination and diubiquitination by NEDD4. Multiple lysine residues are probably modified. Ubiquitination requires TNIK, prevents interaction with effectors and inactivates RAP2A. Ubiquitination by the ECS(RAB40B) complex leads to RAP2A localization to lamellipodia plasma membrane, activation, and regulation of sorting at early endosomes for recycling to the lamellipodia plasma membrane. Palmitoylated. Palmitoylation is required for association with recycling endosome membranes and activation of TNIK.

Its subcellular location is the midbody. It localises to the cell projection. The protein localises to the lamellipodium membrane. The protein resides in the golgi apparatus. It is found in the recycling endosome membrane. Its subcellular location is the lysosome. It carries out the reaction GTP + H2O = GDP + phosphate + H(+). Its activity is regulated as follows. Activated by the guanine nucleotide-exchange factors RAPGEF3 and RAPGEF4 in a cAMP-dependent manner. Nucleotide exchange is also specifically stimulated by RAPGEF5, RASGEF1A and RASGEF1B. In terms of biological role, small GTP-binding protein which cycles between a GDP-bound inactive and a GTP-bound active form. In its active form interacts with and regulates several effectors including MAP4K4, MINK1 and TNIK. Part of a signaling complex composed of NEDD4, RAP2A and TNIK which regulates neuronal dendrite extension and arborization during development. More generally, it is part of several signaling cascades and may regulate cytoskeletal rearrangements, cell migration, cell adhesion and cell spreading. This chain is Ras-related protein Rap-2a (RAP2A), found in Sus scrofa (Pig).